Reading from the N-terminus, the 368-residue chain is Transmembrane protein 26 (368 aa).

A run of 3 helical transmembrane segments spans residues 4 to 24, 36 to 56, and 65 to 85; these read LVFL…LVGV, YWLL…TLKF, and FSPA…LLEL. N-linked (GlcNAc...) asparagine glycosylation occurs at N110. A run of 5 helical transmembrane segments spans residues 150–170, 177–197, 208–228, 257–277, and 281–301; these read QTFL…GGIT, LLLM…ETLE, VYAI…DLAV, IGIS…ILMT, and VINQ…VLQL. Positions 324–368 are disordered; the sequence is GEHGCRAQTSESGPSQRDWQNESKEGLAIPLRGSPVTSDDSHHTP. The span at 330–341 shows a compositional bias: polar residues; sequence AQTSESGPSQRD.

It localises to the membrane. This chain is Transmembrane protein 26 (TMEM26), found in Homo sapiens (Human).